A 124-amino-acid chain; its full sequence is Large ribosomal subunit protein bL12 (124 aa).

Belongs to the bacterial ribosomal protein bL12 family. As to quaternary structure, homodimer. Part of the ribosomal stalk of the 50S ribosomal subunit. Forms a multimeric L10(L12)X complex, where L10 forms an elongated spine to which 2 to 4 L12 dimers bind in a sequential fashion. Binds GTP-bound translation factors.

Its function is as follows. Forms part of the ribosomal stalk which helps the ribosome interact with GTP-bound translation factors. Is thus essential for accurate translation. In Desulforamulus reducens (strain ATCC BAA-1160 / DSM 100696 / MI-1) (Desulfotomaculum reducens), this protein is Large ribosomal subunit protein bL12.